The chain runs to 255 residues: uncharacterized protein (255 aa).

Residues 4–59 (RNERLNLIRKRVDQYGQVAVKDLAIFLQVTPETVRKDLETLENDKLITRTHGGAIQ) enclose the HTH deoR-type domain. The H-T-H motif DNA-binding region spans 21 to 40 (VAVKDLAIFLQVTPETVRKD).

This is an uncharacterized protein from Staphylococcus epidermidis (strain ATCC 12228 / FDA PCI 1200).